Reading from the N-terminus, the 509-residue chain is tRNA-2-methylthio-N(6)-dimethylallyladenosine synthase (509 aa).

Positions 1 to 15 (MNEQQRLASRQANSS) are enriched in polar residues. Residues 1–25 (MNEQQRLASRQANSSTKKEEKDYSK) are disordered. The span at 16–25 (TKKEEKDYSK) shows a compositional bias: basic and acidic residues. The MTTase N-terminal domain occupies 66–184 (RKFYIRTYGC…LPYILKDAMF (119 aa)). Positions 75, 111, 145, 221, 225, and 228 each coordinate [4Fe-4S] cluster. The Radical SAM core domain maps to 207-437 (RRGDIKAWVN…NTLVNEYGVN (231 aa)). The TRAM domain maps to 440-503 (KRYIGQIVEV…TWSLNGELVK (64 aa)).

It belongs to the methylthiotransferase family. MiaB subfamily. In terms of assembly, monomer. It depends on [4Fe-4S] cluster as a cofactor.

Its subcellular location is the cytoplasm. It carries out the reaction N(6)-dimethylallyladenosine(37) in tRNA + (sulfur carrier)-SH + AH2 + 2 S-adenosyl-L-methionine = 2-methylsulfanyl-N(6)-dimethylallyladenosine(37) in tRNA + (sulfur carrier)-H + 5'-deoxyadenosine + L-methionine + A + S-adenosyl-L-homocysteine + 2 H(+). Its function is as follows. Catalyzes the methylthiolation of N6-(dimethylallyl)adenosine (i(6)A), leading to the formation of 2-methylthio-N6-(dimethylallyl)adenosine (ms(2)i(6)A) at position 37 in tRNAs that read codons beginning with uridine. The protein is tRNA-2-methylthio-N(6)-dimethylallyladenosine synthase of Bacillus mycoides (strain KBAB4) (Bacillus weihenstephanensis).